The sequence spans 491 residues: UDP-N-acetylmuramate--L-alanine ligase (491 aa).

Residue 126 to 132 (GTHGKTT) coordinates ATP.

It belongs to the MurCDEF family.

The protein resides in the cytoplasm. It carries out the reaction UDP-N-acetyl-alpha-D-muramate + L-alanine + ATP = UDP-N-acetyl-alpha-D-muramoyl-L-alanine + ADP + phosphate + H(+). Its pathway is cell wall biogenesis; peptidoglycan biosynthesis. Its function is as follows. Cell wall formation. This is UDP-N-acetylmuramate--L-alanine ligase from Shigella flexneri serotype 5b (strain 8401).